The primary structure comprises 940 residues: PTS system glucose-specific EIICBA component (940 aa).

In terms of domain architecture, PTS EIIC type-1; first part spans 1–284; that stretch reads MQIKAQDTGQ…YAPLWYTSAG (284 aa). The next 5 membrane-spanning stretches (helical) occupy residues 43–63, 83–103, 112–132, 175–195, and 209–229; these read LMIP…GDAI, GGDV…AITF, FSAF…ILPF, VFGG…FYAI, and FVPI…LMIW. Residues 285 to 478 form a unknown region; sequence GSLQEIVNQQ…VNSFRVAVES (194 aa). Residues 479–630 form the PTS EIIC type-1; second part domain; that stretch reads LNPAQYSQGK…FNLATPGRGG (152 aa). 5 consecutive transmembrane segments (helical) span residues 487–507, 515–535, 537–557, 564–584, and 598–618; these read GKFP…ILAA, AASI…TEPF, FTFL…LAAV, ILGA…ILYG, and LVPI…YFLI. The PTS EIIB type-1 domain occupies 661-743; the sequence is QIEAGILLQA…QDIIQGKVNW (83 aa). The active-site Phosphocysteine intermediate; for EIIB activity is the Cys-683. Residues 794–907 enclose the PTS EIIA type-1 domain; the sequence is DETFKQKLVG…NPITPFVVMK (114 aa). His-847 acts as the Tele-phosphohistidine intermediate; for EIIA activity in catalysis.

It localises to the cell membrane. It carries out the reaction N(pros)-phospho-L-histidyl-[protein] + D-glucose(out) = D-glucose 6-phosphate(in) + L-histidyl-[protein]. Its function is as follows. The phosphoenolpyruvate-dependent sugar phosphotransferase system (sugar PTS), a major carbohydrate active transport system, catalyzes the phosphorylation of incoming sugar substrates concomitantly with their translocation across the cell membrane. This system is involved in glucose transport. The polypeptide is PTS system glucose-specific EIICBA component (ptsG) (Mycoplasma pneumoniae (strain ATCC 29342 / M129 / Subtype 1) (Mycoplasmoides pneumoniae)).